A 124-amino-acid polypeptide reads, in one-letter code: UPF0342 protein DSY2926 (124 aa).

It belongs to the UPF0342 family.

The polypeptide is UPF0342 protein DSY2926 (Desulfitobacterium hafniense (strain Y51)).